The sequence spans 377 residues: METISPFVAIRRDLHKIPELGFQEFKTQQYLLNYIQSLPQERLDVRTWKTGIFVKVSGTAPRKTIGYRADIDGLPISEETGLPYRSEHAGQMHACGHDVHMSIALGVLTHFAHNPIRDDLLFIFQPAEEGPGGAKPMLESDIMREWKPDMIVALHIAPEYPVGTIATKEGLLFANTSELFIDLKGKGGHAAFPHLANDMVVAACALVTQLQSIVARNVDPLDSAVITIGKITSGTVQNVIAEHARLEGTIRTLSIDAMQAVKRRIEALVRGVEVAYECEAVIDYGAMYHEVYNNPALTTEFIQFAETHTDMNVIRCKEAMTGEDFGYMLAEIPGFMFWLGVDSPYGLHHAKLVPNEAAIDRAIAFLISYFSWKGNME.

Residue Asp-70 is part of the active site. Residue Glu-129 is the Proton acceptor of the active site.

Belongs to the peptidase M20A family. N-acetyldiaminopimelate deacetylase subfamily.

It catalyses the reaction N-acetyl-(2S,6S)-2,6-diaminopimelate + H2O = (2S,6S)-2,6-diaminopimelate + acetate. It functions in the pathway amino-acid biosynthesis; L-lysine biosynthesis via DAP pathway; LL-2,6-diaminopimelate from (S)-tetrahydrodipicolinate (acetylase route): step 3/3. Catalyzes the conversion of N-acetyl-diaminopimelate to diaminopimelate and acetate. This chain is N-acetyldiaminopimelate deacetylase, found in Geobacillus thermodenitrificans (strain NG80-2).